A 310-amino-acid polypeptide reads, in one-letter code: Homoserine O-acetyltransferase (310 aa).

Cys-142 serves as the catalytic Acyl-thioester intermediate. Substrate contacts are provided by Lys-163 and Ser-192. His-235 acts as the Proton acceptor in catalysis. The active site involves Glu-237. Substrate is bound at residue Arg-249.

It belongs to the MetA family.

The protein resides in the cytoplasm. The enzyme catalyses L-homoserine + acetyl-CoA = O-acetyl-L-homoserine + CoA. It participates in amino-acid biosynthesis; L-methionine biosynthesis via de novo pathway; O-acetyl-L-homoserine from L-homoserine: step 1/1. Transfers an acetyl group from acetyl-CoA to L-homoserine, forming acetyl-L-homoserine. This Lachnospira eligens (strain ATCC 27750 / DSM 3376 / VPI C15-48 / C15-B4) (Eubacterium eligens) protein is Homoserine O-acetyltransferase.